The chain runs to 396 residues: Ribosomal RNA large subunit methyltransferase I (396 aa).

Residues 2–79 (SIRIKLKPGR…KEEAIDRDFF (78 aa)) enclose the PUA domain.

The protein belongs to the methyltransferase superfamily. RlmI family.

The protein resides in the cytoplasm. It catalyses the reaction cytidine(1962) in 23S rRNA + S-adenosyl-L-methionine = 5-methylcytidine(1962) in 23S rRNA + S-adenosyl-L-homocysteine + H(+). In terms of biological role, specifically methylates the cytosine at position 1962 (m5C1962) of 23S rRNA. In Shewanella amazonensis (strain ATCC BAA-1098 / SB2B), this protein is Ribosomal RNA large subunit methyltransferase I.